The primary structure comprises 333 residues: MTSAIFLAMLCLGMALPSPAPDPILDVEWQKWKIKYGKAYSLEEEGQKRAVWEDNMKKIKLHNGENGLGKHGFTMEMNAFGDMTLEEFRKVMIEIPVPTVKKGKSVQKRLSVNLPKFINWKKRGYVTPVQTQGRCNSCWAFSVTGAIEGQMFRKTGQLIPLSVQNLVDCSRPQGNWGCYLGNTYLALHYVMENGGLESEATYPYEEKDGSCRYSPENSTANITGFEFVPKNEDALMNAVASIGPISVAIDARHASFLFYKRGIYYEPNCSSCVVTHSMLLVGYGFTGRESDGRKYWLVKNSMGTQWGNKGYMKISRDKGNHCGIATYALYPRV.

Positions 1–15 (MTSAIFLAMLCLGMA) are cleaved as a signal peptide. The propeptide at 16–113 (LPSPAPDPIL…KSVQKRLSVN (98 aa)) is activation peptide. Cystine bridges form between Cys135–Cys178 and Cys169–Cys211. Cys138 is a catalytic residue. Residues Asn217, Asn221, and Asn268 are each glycosylated (N-linked (GlcNAc...) asparagine). A disulfide bridge connects residues Cys269 and Cys322. Catalysis depends on residues His276 and Asn300.

This sequence belongs to the peptidase C1 family. Placenta.

The protein resides in the lysosome. The sequence is that of Cathepsin M (Ctsm) from Mus musculus (Mouse).